Reading from the N-terminus, the 78-residue chain is Structural DNA-binding protein p10 (78 aa).

A compositionally biased stretch (low complexity) spans 1–24 (MPTKAGTKSTANKKTTKGSSKSGS). A disordered region spans residues 1 to 41 (MPTKAGTKSTANKKTTKGSSKSGSPRGHTGKTHAPPSMHSG).

This sequence belongs to the asfivirus P10 family.

The protein resides in the virion. In terms of biological role, may play a role in genome packaging through direct interaction with viral DNA. Binds to ssDNA and dsDNA with the same apparent affinity in vitro. This chain is Structural DNA-binding protein p10, found in African swine fever virus (isolate Tick/South Africa/Pretoriuskop Pr4/1996) (ASFV).